Here is a 398-residue protein sequence, read N- to C-terminus: Succinate--CoA ligase [ADP-forming] subunit beta (398 aa).

An ATP-grasp domain is found at 9-254; sequence KALLKSYGAP…TTEEDDKEIE (246 aa). ATP is bound by residues Lys46, 53 to 55, Glu109, Ala112, and Glu117; that span reads GRG. The Mg(2+) site is built by Asn209 and Asp223. Residues Asn274 and 331–333 each bind substrate; that span reads GIM.

The protein belongs to the succinate/malate CoA ligase beta subunit family. Heterotetramer of two alpha and two beta subunits. It depends on Mg(2+) as a cofactor.

The catalysed reaction is succinate + ATP + CoA = succinyl-CoA + ADP + phosphate. It carries out the reaction GTP + succinate + CoA = succinyl-CoA + GDP + phosphate. Its pathway is carbohydrate metabolism; tricarboxylic acid cycle; succinate from succinyl-CoA (ligase route): step 1/1. Functionally, succinyl-CoA synthetase functions in the citric acid cycle (TCA), coupling the hydrolysis of succinyl-CoA to the synthesis of either ATP or GTP and thus represents the only step of substrate-level phosphorylation in the TCA. The beta subunit provides nucleotide specificity of the enzyme and binds the substrate succinate, while the binding sites for coenzyme A and phosphate are found in the alpha subunit. This is Succinate--CoA ligase [ADP-forming] subunit beta from Rhizobium meliloti (strain 1021) (Ensifer meliloti).